Here is a 317-residue protein sequence, read N- to C-terminus: Protoheme IX farnesyltransferase (317 aa).

Transmembrane regions (helical) follow at residues Ile44 to Phe64, His93 to Cys113, Val116 to Tyr136, Leu143 to Ile163, Ala178 to Met198, Val221 to Pro241, Ala243 to Val263, and Leu288 to Gly308.

This sequence belongs to the UbiA prenyltransferase family. Protoheme IX farnesyltransferase subfamily.

The protein localises to the cell membrane. The enzyme catalyses heme b + (2E,6E)-farnesyl diphosphate + H2O = Fe(II)-heme o + diphosphate. It participates in porphyrin-containing compound metabolism; heme O biosynthesis; heme O from protoheme: step 1/1. In terms of biological role, converts heme B (protoheme IX) to heme O by substitution of the vinyl group on carbon 2 of heme B porphyrin ring with a hydroxyethyl farnesyl side group. This is Protoheme IX farnesyltransferase from Corynebacterium diphtheriae (strain ATCC 700971 / NCTC 13129 / Biotype gravis).